A 190-amino-acid polypeptide reads, in one-letter code: Xanthine phosphoribosyltransferase (190 aa).

Xanthine-binding residues include L20 and N27. 127–131 (AYGNA) lines the 5-phospho-alpha-D-ribose 1-diphosphate pocket. K155 serves as a coordination point for xanthine.

The protein belongs to the purine/pyrimidine phosphoribosyltransferase family. Xpt subfamily. As to quaternary structure, homodimer.

The protein localises to the cytoplasm. The enzyme catalyses XMP + diphosphate = xanthine + 5-phospho-alpha-D-ribose 1-diphosphate. Its pathway is purine metabolism; XMP biosynthesis via salvage pathway; XMP from xanthine: step 1/1. Its function is as follows. Converts the preformed base xanthine, a product of nucleic acid breakdown, to xanthosine 5'-monophosphate (XMP), so it can be reused for RNA or DNA synthesis. The protein is Xanthine phosphoribosyltransferase of Bacteroides thetaiotaomicron (strain ATCC 29148 / DSM 2079 / JCM 5827 / CCUG 10774 / NCTC 10582 / VPI-5482 / E50).